The sequence spans 321 residues: Cytochrome c biogenesis protein CcsA (321 aa).

The next 8 helical transmembrane spans lie at 17–37, 48–68, 71–91, 98–118, 143–163, 225–245, 259–273, and 286–306; these read VVSI…FVGL, TFFC…HLPI, LYES…VPYF, LSTI…WGLL, MVSG…LLVI, ILSI…VWAN, TWAF…IYFH, and AIVA…VNLL.

It belongs to the CcmF/CycK/Ccl1/NrfE/CcsA family. In terms of assembly, may interact with Ccs1.

The protein resides in the plastid. It localises to the chloroplast thylakoid membrane. Functionally, required during biogenesis of c-type cytochromes (cytochrome c6 and cytochrome f) at the step of heme attachment. The protein is Cytochrome c biogenesis protein CcsA of Populus trichocarpa (Western balsam poplar).